Reading from the N-terminus, the 242-residue chain is tRNA pseudouridine synthase A (242 aa).

The active-site Nucleophile is the D51. Position 107 (Y107) interacts with substrate.

Belongs to the tRNA pseudouridine synthase TruA family. In terms of assembly, homodimer.

It carries out the reaction uridine(38/39/40) in tRNA = pseudouridine(38/39/40) in tRNA. Functionally, formation of pseudouridine at positions 38, 39 and 40 in the anticodon stem and loop of transfer RNAs. The sequence is that of tRNA pseudouridine synthase A from Helicobacter pylori (strain HPAG1).